Consider the following 226-residue polypeptide: Fibrillarin-like rRNA/tRNA 2'-O-methyltransferase (226 aa).

S-adenosyl-L-methionine-binding positions include 85 to 86 (TT), 104 to 105 (EF), 129 to 130 (DA), and 149 to 152 (DVAQ).

It belongs to the methyltransferase superfamily. Fibrillarin family. As to quaternary structure, interacts with nop5. Component of box C/D small ribonucleoprotein (sRNP) particles that contain rpl7ae, FlpA and nop5, plus a guide RNA.

In terms of biological role, involved in pre-rRNA and tRNA processing. Utilizes the methyl donor S-adenosyl-L-methionine to catalyze the site-specific 2'-hydroxyl methylation of ribose moieties in rRNA and tRNA. Site specificity is provided by a guide RNA that base pairs with the substrate. Methylation occurs at a characteristic distance from the sequence involved in base pairing with the guide RNA. In Thermococcus sibiricus (strain DSM 12597 / MM 739), this protein is Fibrillarin-like rRNA/tRNA 2'-O-methyltransferase.